The following is a 212-amino-acid chain: Leucyl/phenylalanyl-tRNA--protein transferase (212 aa).

The protein belongs to the L/F-transferase family.

Its subcellular location is the cytoplasm. It carries out the reaction N-terminal L-lysyl-[protein] + L-leucyl-tRNA(Leu) = N-terminal L-leucyl-L-lysyl-[protein] + tRNA(Leu) + H(+). The enzyme catalyses N-terminal L-arginyl-[protein] + L-leucyl-tRNA(Leu) = N-terminal L-leucyl-L-arginyl-[protein] + tRNA(Leu) + H(+). It catalyses the reaction L-phenylalanyl-tRNA(Phe) + an N-terminal L-alpha-aminoacyl-[protein] = an N-terminal L-phenylalanyl-L-alpha-aminoacyl-[protein] + tRNA(Phe). Functionally, functions in the N-end rule pathway of protein degradation where it conjugates Leu, Phe and, less efficiently, Met from aminoacyl-tRNAs to the N-termini of proteins containing an N-terminal arginine or lysine. The sequence is that of Leucyl/phenylalanyl-tRNA--protein transferase from Flavobacterium johnsoniae (strain ATCC 17061 / DSM 2064 / JCM 8514 / BCRC 14874 / CCUG 350202 / NBRC 14942 / NCIMB 11054 / UW101) (Cytophaga johnsonae).